The chain runs to 501 residues: Alpha-internexin (501 aa).

A head region spans residues methionine 1–tyrosine 87. Serine 72 carries the post-translational modification Phosphoserine. The tract at residues lysine 88–leucine 129 is coil 1A. The IF rod domain maps to glutamate 94–phenylalanine 407. Residues arginine 130–leucine 142 are linker 1. The tract at residues phenylalanine 143 to leucine 238 is coil 1B. Serine 219 is modified (phosphoserine). Residues leucine 239–threonine 262 are linker 2. Residues serine 263–serine 408 are coil 2. Position 290 is an N6-acetyllysine (lysine 290). A phosphoserine mark is found at serine 335 and serine 498. The tract at residues threonine 409 to methionine 501 is tail. A disordered region spans residues serine 441–methionine 501. A compositionally biased stretch (polar residues) spans lysine 488 to methionine 501.

The protein belongs to the intermediate filament family. Forms homodimers (in vitro). Forms heterodimers with NEFL, NEFM or NEFH (in vitro). In terms of processing, O-glycosylated.

Class-IV neuronal intermediate filament that is able to self-assemble. It is involved in the morphogenesis of neurons. It may form an independent structural network without the involvement of other neurofilaments or it may cooperate with NEFL to form the filamentous backbone to which NEFM and NEFH attach to form the cross-bridges. May also cooperate with the neuronal intermediate filament protein PRPH to form filamentous networks. The sequence is that of Alpha-internexin (Ina) from Mus musculus (Mouse).